Consider the following 495-residue polypeptide: Cornulin (495 aa).

One can recognise an EF-hand domain in the interval 49-84 (HDPATVDEVLRLLDEDHTGTVEFKEFLVLVFKVAQA). Residues Asp62, Asp64, Thr66, Thr68, and Glu73 each contribute to the Ca(2+) site. 2 disordered regions span residues 96–439 (ACGS…TVVG) and 460–481 (LHTS…KRGI). The span at 99–110 (SQESGSLHSGAS) shows a compositional bias: polar residues. Residues 137–151 (HRQSQQGSRGQNRPG) are compositionally biased toward low complexity. Polar residues predominate over residues 152 to 194 (VQTQGQATGSAWVSSYDRQAESQSQERISPQIQLSGQTEQTQK). The segment covering 196–222 (GEGKRNQTTEMRPERQPQTREQDRAHQ) has biased composition (basic and acidic residues). The span at 226 to 242 (TVTGSGTQTQAGATQTV) shows a compositional bias: low complexity. 2 stretches are compositionally biased toward polar residues: residues 243–282 (EQDS…SQAV) and 290–303 (QAGT…QTVE). Positions 307–324 (SHQTGSTSTQTQESTNGQ) are enriched in low complexity. Over residues 334-355 (GRSQTSQAVTGGHTQIQAGSHT) the composition is skewed to polar residues. Low complexity predominate over residues 374–385 (QGQTQTQPGSGQ). Composition is skewed to polar residues over residues 403–420 (QAQT…WSST) and 460–473 (LHTS…QDAA).

The protein belongs to the S100-fused protein family. In terms of assembly, homodimer. Expressed in the basal skin layer (at protein level). Squamous epithelia cell-specific. Expressed in the esophagus (periphery of the cells of the granular and the upper spinous layers), foreskin (granular and lower cornified cells), scalp skin (granular layer), inner root sheath of the hair follicle and in primary keratinocytes (at protein level). Expressed in the squamous epithelium of the cervix, esophagus, foreskin and larynx. Expressed in the fetal bladder and scalp skin. Expressed at very low levels in the lung, kidney, uterus, skeletal muscle, heart and fetal brain. Undetectable or barely detectable in esophageal and oral squamous cell carcinoma compared with the matched adjacent normal esophageal mucosa. Undetectable or barely detectable in larynx and esophagus from patients with pH-documented laryngopharyngeal reflux (LPR).

Its subcellular location is the cytoplasm. Promotes cell proliferation, G1/S cell cycle progression and induces expression of the cell cycle regulator CCND1. Regulates proliferation induced by pro-inflammatory cytokine response via activation of NFKB1 and PI3K/AKT signaling pathways. The chain is Cornulin (CRNN) from Homo sapiens (Human).